A 327-amino-acid chain; its full sequence is Glycerol-3-phosphate dehydrogenase [NAD(P)+] (327 aa).

NADPH contacts are provided by Trp-11, Arg-30, and Lys-103. 3 residues coordinate sn-glycerol 3-phosphate: Lys-103, Gly-131, and Ser-133. Ala-135 is a binding site for NADPH. Sn-glycerol 3-phosphate contacts are provided by Lys-186, Asp-243, Ser-253, Arg-254, and Asn-255. Lys-186 serves as the catalytic Proton acceptor. Residue Arg-254 coordinates NADPH. Positions 281 and 283 each coordinate NADPH.

It belongs to the NAD-dependent glycerol-3-phosphate dehydrogenase family.

The protein resides in the cytoplasm. The enzyme catalyses sn-glycerol 3-phosphate + NAD(+) = dihydroxyacetone phosphate + NADH + H(+). It carries out the reaction sn-glycerol 3-phosphate + NADP(+) = dihydroxyacetone phosphate + NADPH + H(+). Its pathway is membrane lipid metabolism; glycerophospholipid metabolism. Functionally, catalyzes the reduction of the glycolytic intermediate dihydroxyacetone phosphate (DHAP) to sn-glycerol 3-phosphate (G3P), the key precursor for phospholipid synthesis. This Wolbachia sp. subsp. Drosophila simulans (strain wRi) protein is Glycerol-3-phosphate dehydrogenase [NAD(P)+].